The primary structure comprises 134 residues: Profilin-2 (134 aa).

The cysteines at positions 13 and 118 are disulfide-linked. Positions 84–100 (AVIRGKKGSGGITIKKT) match the Involved in PIP2 interaction motif. Phosphothreonine is present on Thr-114.

It belongs to the profilin family. As to quaternary structure, occurs in many kinds of cells as a complex with monomeric actin in a 1:1 ratio. In terms of processing, phosphorylated by MAP kinases.

The protein resides in the cytoplasm. The protein localises to the cytoskeleton. Binds to actin and affects the structure of the cytoskeleton. At high concentrations, profilin prevents the polymerization of actin, whereas it enhances it at low concentrations. The sequence is that of Profilin-2 from Olea europaea (Common olive).